A 227-amino-acid chain; its full sequence is Cytochrome c oxidase subunit 2 (227 aa).

N-formylmethionine is present on methionine 1. At methionine 1 to serine 14 the chain is on the mitochondrial intermembrane side. The chain crosses the membrane as a helical span at residues proline 15–methionine 45. Residues leucine 46–glutamine 59 lie on the Mitochondrial matrix side of the membrane. A helical transmembrane segment spans residues glutamate 60–methionine 87. Residues aspartate 88–leucine 227 lie on the Mitochondrial intermembrane side of the membrane. Cu cation-binding residues include histidine 161, cysteine 196, glutamate 198, cysteine 200, histidine 204, and methionine 207. Glutamate 198 is a Mg(2+) binding site. Tyrosine 218 is subject to Phosphotyrosine.

The protein belongs to the cytochrome c oxidase subunit 2 family. In terms of assembly, component of the cytochrome c oxidase (complex IV, CIV), a multisubunit enzyme composed of 14 subunits. The complex is composed of a catalytic core of 3 subunits MT-CO1, MT-CO2 and MT-CO3, encoded in the mitochondrial DNA, and 11 supernumerary subunits COX4I, COX5A, COX5B, COX6A, COX6B, COX6C, COX7A, COX7B, COX7C, COX8 and NDUFA4, which are encoded in the nuclear genome. The complex exists as a monomer or a dimer and forms supercomplexes (SCs) in the inner mitochondrial membrane with NADH-ubiquinone oxidoreductase (complex I, CI) and ubiquinol-cytochrome c oxidoreductase (cytochrome b-c1 complex, complex III, CIII), resulting in different assemblies (supercomplex SCI(1)III(2)IV(1) and megacomplex MCI(2)III(2)IV(2)). Found in a complex with TMEM177, COA6, COX18, COX20, SCO1 and SCO2. Interacts with TMEM177 in a COX20-dependent manner. Interacts with COX20. Interacts with COX16. Requires Cu cation as cofactor.

It is found in the mitochondrion inner membrane. The enzyme catalyses 4 Fe(II)-[cytochrome c] + O2 + 8 H(+)(in) = 4 Fe(III)-[cytochrome c] + 2 H2O + 4 H(+)(out). Functionally, component of the cytochrome c oxidase, the last enzyme in the mitochondrial electron transport chain which drives oxidative phosphorylation. The respiratory chain contains 3 multisubunit complexes succinate dehydrogenase (complex II, CII), ubiquinol-cytochrome c oxidoreductase (cytochrome b-c1 complex, complex III, CIII) and cytochrome c oxidase (complex IV, CIV), that cooperate to transfer electrons derived from NADH and succinate to molecular oxygen, creating an electrochemical gradient over the inner membrane that drives transmembrane transport and the ATP synthase. Cytochrome c oxidase is the component of the respiratory chain that catalyzes the reduction of oxygen to water. Electrons originating from reduced cytochrome c in the intermembrane space (IMS) are transferred via the dinuclear copper A center (CU(A)) of subunit 2 and heme A of subunit 1 to the active site in subunit 1, a binuclear center (BNC) formed by heme A3 and copper B (CU(B)). The BNC reduces molecular oxygen to 2 water molecules using 4 electrons from cytochrome c in the IMS and 4 protons from the mitochondrial matrix. This chain is Cytochrome c oxidase subunit 2 (MT-CO2), found in Bos indicus (Zebu).